A 496-amino-acid chain; its full sequence is Angiopoietin-2 (496 aa).

An N-terminal signal peptide occupies residues 1 to 18 (MWQLVFFALSCDLVLAAA). 6 N-linked (GlcNAc...) asparagine glycosylation sites follow: Asn-89, Asn-119, Asn-133, Asn-151, Asn-240, and Asn-304. A coiled-coil region spans residues 130–255 (NLLNQTAEQT…KQQHDLMETV (126 aa)). The Fibrinogen C-terminal domain occupies 275-495 (KEEQIIFRDC…ATTMMIRPAD (221 aa)). Residues Cys-284 and Cys-313 are joined by a disulfide bond. Residues Asp-429, Asp-431, Cys-433, and Cys-435 each contribute to the Ca(2+) site. Intrachain disulfides connect Cys-433–Cys-435 and Cys-437–Cys-450.

In terms of assembly, interacts with TEK/TIE2, competing for the same binding site as ANGPT1. Interacts with ITGA5. Interacts with SVEP1/polydom. Interacts with THBD; this interaction significantly inhibits the generation of activated PC and TAFIa/CPB2 by the thrombin/thrombomodulin complex.

The protein localises to the secreted. Its function is as follows. Binds to TEK/TIE2, competing for the ANGPT1 binding site, and modulating ANGPT1 signaling. Can induce tyrosine phosphorylation of TEK/TIE2 in the absence of ANGPT1. In the absence of angiogenic inducers, such as VEGF, ANGPT2-mediated loosening of cell-matrix contacts may induce endothelial cell apoptosis with consequent vascular regression. In concert with VEGF, it may facilitate endothelial cell migration and proliferation, thus serving as a permissive angiogenic signal. Involved in the regulation of lymphangiogenesis. The chain is Angiopoietin-2 (ANGPT2) from Sus scrofa (Pig).